Consider the following 337-residue polypeptide: Cytoskeleton protein RodZ (337 aa).

At Met-1–Gly-111 the chain is on the cytoplasmic side. One can recognise an HTH cro/C1-type domain in the interval Leu-19–Leu-71. A DNA-binding region (H-T-H motif) is located at residues Gln-30 to Glu-49. Residues Trp-112–Trp-132 form a helical; Signal-anchor for type II membrane protein membrane-spanning segment. Topologically, residues Trp-133–Gln-337 are periplasmic. Over residues Thr-145–Asn-167 the composition is skewed to polar residues. The tract at residues Thr-145–Pro-237 is disordered. Over residues Thr-168–Gln-207 the composition is skewed to low complexity. Polar residues predominate over residues Asn-208–Val-218. Residues Asp-219–Pro-237 are compositionally biased toward low complexity.

This sequence belongs to the RodZ family.

It localises to the cell inner membrane. Cytoskeletal protein that is involved in cell-shape control through regulation of the length of the long axis. This Escherichia coli (strain 55989 / EAEC) protein is Cytoskeleton protein RodZ.